The chain runs to 300 residues: Pleckstrin homology domain-containing family A member 3 (300 aa).

In terms of domain architecture, PH spans 1–93 (MEGVLYKWTN…WLVALGSSKA (93 aa)). An interaction with SACM1L region spans residues 1–100 (MEGVLYKWTN…SKACLTDTRT (100 aa)). The segment at 97 to 300 (DTRTKKEKEI…SEDTLPSFSS (204 aa)) is interaction with VAPA and VAPB. Residues 197–300 (PVSPSPVQMM…SEDTLPSFSS (104 aa)) form a disordered region. Ser236 and Ser244 each carry phosphoserine. Over residues 279–290 (EESRLMAKKQSE) the composition is skewed to basic and acidic residues.

Interacts with GTP-bound ARF1. Interacts with SACM1L and VAPA and/or VAPB to form a ternary complex. In terms of tissue distribution, widely expressed.

The protein resides in the golgi apparatus. It localises to the trans-Golgi network membrane. Its function is as follows. Plays a role in regulation of vesicular cargo transport from the trans-Golgi network (TGN) to the plasma membrane. Regulates Golgi phosphatidylinositol 4-phosphate (PtdIns(4)P) levels and activates the PtdIns(4)P phosphatase activity of SACM1L when it binds PtdIns(4)P in 'trans' configuration. Binds preferentially to PtdIns(4)P. Negatively regulates APOB secretion from hepatocytes. The protein is Pleckstrin homology domain-containing family A member 3 (PLEKHA3) of Homo sapiens (Human).